Consider the following 306-residue polypeptide: Protein farnesyltransferase/geranylgeranyltransferase type-1 subunit alpha (306 aa).

PFTA repeat units lie at residues tyrosine 48 to asparagine 82, asparagine 84 to glutamate 118, aspartate 125 to leucine 159, asparagine 161 to histidine 195, and threonine 201 to arginine 235.

The protein belongs to the protein prenyltransferase subunit alpha family. Heterodimer of an alpha and a beta subunit. The cofactor is Mg(2+).

It catalyses the reaction L-cysteinyl-[protein] + (2E,6E)-farnesyl diphosphate = S-(2E,6E)-farnesyl-L-cysteinyl-[protein] + diphosphate. The enzyme catalyses geranylgeranyl diphosphate + L-cysteinyl-[protein] = S-geranylgeranyl-L-cysteinyl-[protein] + diphosphate. In terms of biological role, essential subunit of both the farnesyltransferase and the geranylgeranyltransferase complex. Contributes to the transfer of a farnesyl or geranylgeranyl moiety from farnesyl or geranylgeranyl diphosphate to a cysteine at the fourth position from the C-terminus of several proteins having the C-terminal sequence Cys-aliphatic-aliphatic-X. The protein is Protein farnesyltransferase/geranylgeranyltransferase type-1 subunit alpha (RAM2) of Candida albicans (Yeast).